Consider the following 209-residue polypeptide: Ribonuclease HII (209 aa).

In terms of domain architecture, RNase H type-2 spans 25–209 (RRIAGIDEAG…ATFRGVREYL (185 aa)). Residues aspartate 31, glutamate 32, and aspartate 123 each coordinate a divalent metal cation.

It belongs to the RNase HII family. Requires Mn(2+) as cofactor. It depends on Mg(2+) as a cofactor.

The protein resides in the cytoplasm. It catalyses the reaction Endonucleolytic cleavage to 5'-phosphomonoester.. In terms of biological role, endonuclease that specifically degrades the RNA of RNA-DNA hybrids. The protein is Ribonuclease HII of Syntrophotalea carbinolica (strain DSM 2380 / NBRC 103641 / GraBd1) (Pelobacter carbinolicus).